A 1255-amino-acid polypeptide reads, in one-letter code: ATP-binding cassette sub-family B member 5 (1255 aa).

Residues 46 to 66 traverse the membrane as a helical segment; that stretch reads IVLMTLGILASMINGATVPLM. In terms of domain architecture, ABC transmembrane type-1 1 spans 51–351; the sequence is LGILASMING…SVAPHLETFT (301 aa). 2 N-linked (GlcNAc...) asparagine glycosylation sites follow: Asn-86 and Asn-92. Residues 104-124 traverse the membrane as a helical segment; sequence IIVLTLYYIGIGAAALIFGYV. N-linked (GlcNAc...) asparagine glycosylation occurs at Asn-189. 2 helical membrane passes run 290–310 and 314–334; these read LSLG…FWYG and IFGG…FSVI. N-linked (GlcNAc...) asparagine glycosylation is found at Asn-372 and Asn-391. The 237-residue stretch at 387–623 folds into the ABC transporter 1 domain; the sequence is IEFKNVSFSY…QGLYYSLAMA (237 aa). 422 to 429 is an ATP binding site; that stretch reads GPSGSGKS. N-linked (GlcNAc...) asparagine glycosylation occurs at Asn-643. 2 helical membrane passes run 694 to 714 and 738 to 758; these read VLGT…SIIF and MMLV…GLFY. Residues 694-981 form the ABC transmembrane type-1 2 domain; the sequence is VLGTLASALN…TLVWAPEYSK (288 aa). Asn-790 carries N-linked (GlcNAc...) asparagine glycosylation. Transmembrane regions (helical) follow at residues 814-836, 841-863, and 955-975; these read LGIV…IYGW, LILS…MAGF, and MFIV…TLVW. The region spanning 1016–1254 is the ABC transporter 2 domain; sequence LEFREVSFVY…GDTYFKLVAA (239 aa). A glycan (N-linked (GlcNAc...) asparagine) is linked at Asn-1036. 1051 to 1058 lines the ATP pocket; it reads GSSGCGKS. N-linked (GlcNAc...) asparagine glycans are attached at residues Asn-1105, Asn-1189, and Asn-1229.

The protein belongs to the ABC transporter superfamily. ABCB family. Multidrug resistance exporter (TC 3.A.1.201) subfamily. In developing eye, expressed in basal limbal epithelium but not in central cornea. Acts as a marker of limbal stem cells.

The protein localises to the cell membrane. The catalysed reaction is daunorubicin(in) + ATP + H2O = daunorubicin(out) + ADP + phosphate + H(+). In terms of biological role, energy-dependent efflux transporter responsible for decreased drug accumulation in multidrug-resistant cells. Specifically present in limbal stem cells, where it plays a key role in corneal development and repair. The chain is ATP-binding cassette sub-family B member 5 from Mus musculus (Mouse).